A 490-amino-acid chain; its full sequence is Vacuolar amino acid transporter 7 (490 aa).

Topologically, residues 1 to 6 (MEATSS) are cytoplasmic. A helical transmembrane segment spans residues 7–27 (ALSSTANLVKTIVGAGTLAIP). Residues 28 to 34 (YSFKSDG) are Vacuolar-facing. Residues 35 to 55 (VLVGVILTLLAAVTSGLGLFV) traverse the membrane as a helical segment. Residues 56–84 (LSKCSKTLINPRNSSFFTLCMLTYPTLAP) are Cytoplasmic-facing. The chain crosses the membrane as a helical span at residues 85–105 (IFDLAMIVQCFGVGLSYLVLI). The Vacuolar segment spans residues 106–108 (GDL). The chain crosses the membrane as a helical span at residues 109 to 129 (FPGLFGGERNYWIIASAVIII). Residues 130–143 (PLCLVKKLDQLKYS) lie on the Cytoplasmic side of the membrane. The chain crosses the membrane as a helical span at residues 144–164 (SILGLFALAYISILVFSHFVF). Residues 165–190 (ELGKGELTNILRNDICWWKIHDFKGL) lie on the Vacuolar side of the membrane. A helical membrane pass occupies residues 191-211 (LSTFSIIIFAFTGSMNLFPMI). Topologically, residues 212–221 (NELKDNSMEN) are cytoplasmic. The helical transmembrane segment at 222-242 (ITFVINNSISLSTALFLIVGL) threads the bilayer. Residues 243–264 (SGYLTFGNETLGNLMLNYDPNS) are Vacuolar-facing. The helical transmembrane segment at 265 to 285 (IWIVIGKFCLGSMLILSFPLL) threads the bilayer. At 286 to 397 (FHPLRIAVNN…FVKSRFYWIT (112 aa)) the chain is on the cytoplasmic side. The disordered stretch occupies residues 355 to 374 (NGNFDNGSIESQENNNDERG). The span at 357 to 368 (NFDNGSIESQEN) shows a compositional bias: polar residues. The chain crosses the membrane as a helical span at residues 398–418 (ALLLISMYTLALSVQSFALVL). At 419-428 (SFVGATGSTS) the chain is on the vacuolar side. Residues 429-449 (ISFTLPGLLGYKLIGLDSLAI) traverse the membrane as a helical segment. Topologically, residues 450-463 (GKMIPPKDRFYKRC) are cytoplasmic. A helical membrane pass occupies residues 464–484 (SLLLVFYGLSVMFLSLYVTVF). The Vacuolar portion of the chain corresponds to 485 to 490 (NRSDEA).

The protein belongs to the amino acid/polyamine transporter 2 family.

The protein localises to the vacuole membrane. Functionally, probable amino acid transporter of unknown specificity. The sequence is that of Vacuolar amino acid transporter 7 (AVT7) from Saccharomyces cerevisiae (strain ATCC 204508 / S288c) (Baker's yeast).